A 347-amino-acid polypeptide reads, in one-letter code: 8-amino-8-demethylriboflavin N,N-dimethyltransferase (347 aa).

S-adenosyl-L-methionine contacts are provided by residues Asp-209 and 235 to 237 (GDF).

Belongs to the class I-like SAM-binding methyltransferase superfamily. Cation-independent O-methyltransferase family. In terms of assembly, homodimer.

It catalyses the reaction 8-amino-8-demethylriboflavin + 2 S-adenosyl-L-methionine = roseoflavin + 2 S-adenosyl-L-homocysteine + 2 H(+). It participates in antibiotic biosynthesis. Its function is as follows. Catalyzes the S-adenosyl methionine-dependent conversion of 8-amino-8-demethyl-D-riboflavin (AF) into 8-methylamino-8-demethyl-D-riboflavin (MAF) and roseoflavin (RoF), the last two steps in the biosynthesis of the antibiotic roseoflavin. This Streptomyces davaonensis (strain DSM 101723 / JCM 4913 / KCC S-0913 / 768) protein is 8-amino-8-demethylriboflavin N,N-dimethyltransferase.